A 425-amino-acid polypeptide reads, in one-letter code: Serine--tRNA ligase (425 aa).

230 to 232 (TAE) serves as a coordination point for L-serine. Position 261-263 (261-263 (RQE)) interacts with ATP. L-serine is bound at residue Glu-284. 348 to 351 (EISS) provides a ligand contact to ATP. Ser-384 contributes to the L-serine binding site.

It belongs to the class-II aminoacyl-tRNA synthetase family. Type-1 seryl-tRNA synthetase subfamily. In terms of assembly, homodimer. The tRNA molecule binds across the dimer.

Its subcellular location is the cytoplasm. The enzyme catalyses tRNA(Ser) + L-serine + ATP = L-seryl-tRNA(Ser) + AMP + diphosphate + H(+). The catalysed reaction is tRNA(Sec) + L-serine + ATP = L-seryl-tRNA(Sec) + AMP + diphosphate + H(+). Its pathway is aminoacyl-tRNA biosynthesis; selenocysteinyl-tRNA(Sec) biosynthesis; L-seryl-tRNA(Sec) from L-serine and tRNA(Sec): step 1/1. In terms of biological role, catalyzes the attachment of serine to tRNA(Ser). Is also able to aminoacylate tRNA(Sec) with serine, to form the misacylated tRNA L-seryl-tRNA(Sec), which will be further converted into selenocysteinyl-tRNA(Sec). The protein is Serine--tRNA ligase of Caldanaerobacter subterraneus subsp. tengcongensis (strain DSM 15242 / JCM 11007 / NBRC 100824 / MB4) (Thermoanaerobacter tengcongensis).